The primary structure comprises 201 residues: Recombination protein RecR (201 aa).

The C4-type zinc-finger motif lies at 57 to 74; the sequence is CSICGNITATDTDPCVIC. The Toprim domain occupies 82–178; sequence STVFVVENSR…AVTRLAHGLA (97 aa).

The protein belongs to the RecR family.

In terms of biological role, may play a role in DNA repair. It seems to be involved in an RecBC-independent recombinational process of DNA repair. It may act with RecF and RecO. The polypeptide is Recombination protein RecR (Leuconostoc mesenteroides subsp. mesenteroides (strain ATCC 8293 / DSM 20343 / BCRC 11652 / CCM 1803 / JCM 6124 / NCDO 523 / NBRC 100496 / NCIMB 8023 / NCTC 12954 / NRRL B-1118 / 37Y)).